Reading from the N-terminus, the 286-residue chain is Undecaprenyl-diphosphatase (286 aa).

The next 7 helical transmembrane spans lie at 5-25, 55-75, 92-112, 122-142, 185-205, 229-249, and 264-284; these read WFII…FLPV, IDAF…VLYW, SGFK…VLGL, LFNP…MIFA, IIGA…SFFL, MHIV…LIVV, and FAMY…FNVI.

This sequence belongs to the UppP family.

It is found in the cell membrane. The enzyme catalyses di-trans,octa-cis-undecaprenyl diphosphate + H2O = di-trans,octa-cis-undecaprenyl phosphate + phosphate + H(+). In terms of biological role, catalyzes the dephosphorylation of undecaprenyl diphosphate (UPP). Confers resistance to bacitracin. In Clostridium novyi (strain NT), this protein is Undecaprenyl-diphosphatase.